Here is a 262-residue protein sequence, read N- to C-terminus: Acyl-[acyl-carrier-protein]--UDP-N-acetylglucosamine O-acyltransferase (262 aa).

It belongs to the transferase hexapeptide repeat family. LpxA subfamily. As to quaternary structure, homotrimer.

The protein localises to the cytoplasm. The catalysed reaction is a (3R)-hydroxyacyl-[ACP] + UDP-N-acetyl-alpha-D-glucosamine = a UDP-3-O-[(3R)-3-hydroxyacyl]-N-acetyl-alpha-D-glucosamine + holo-[ACP]. It participates in glycolipid biosynthesis; lipid IV(A) biosynthesis; lipid IV(A) from (3R)-3-hydroxytetradecanoyl-[acyl-carrier-protein] and UDP-N-acetyl-alpha-D-glucosamine: step 1/6. In terms of biological role, involved in the biosynthesis of lipid A, a phosphorylated glycolipid that anchors the lipopolysaccharide to the outer membrane of the cell. The polypeptide is Acyl-[acyl-carrier-protein]--UDP-N-acetylglucosamine O-acyltransferase (Psychromonas ingrahamii (strain DSM 17664 / CCUG 51855 / 37)).